Reading from the N-terminus, the 151-residue chain is UPAR/Ly6 domain-containing protein rtv (151 aa).

An N-terminal signal peptide occupies residues 1 to 19 (MQFTSLLLAVIFLISLVSI). Over 20–125 (DGLLRRCYQC…QGDLCNGARS (106 aa)) the chain is Extracellular. 5 cysteine pairs are disulfide-bonded: Cys-26/Cys-65, Cys-29/Cys-38, Cys-60/Cys-88, Cys-100/Cys-113, and Cys-115/Cys-120. An N-linked (GlcNAc...) asparagine glycan is attached at Asn-45. Residue Asn-121 is the site of GPI-anchor amidated asparagine attachment. Residues 122-151 (GARSWSSAPQMILITMLPLLGSWLLQRMRN) constitute a propeptide, removed in mature form. The helical transmembrane segment at 126 to 146 (WSSAPQMILITMLPLLGSWLL) threads the bilayer. At 147-151 (QRMRN) the chain is on the cytoplasmic side.

This sequence belongs to the quiver family.

The protein resides in the cell membrane. Functionally, required for chitin fiber assembly and organization involved in cuticle formation and tracheal development. The chain is UPAR/Ly6 domain-containing protein rtv from Drosophila melanogaster (Fruit fly).